The following is a 280-amino-acid chain: Eukaryotic translation initiation factor 3 subunit F-1 (280 aa).

The region spanning 8 to 138 (VRVHPVVLFQ…LRAYICIQLG (131 aa)) is the MPN domain.

This sequence belongs to the eIF-3 subunit F family. In terms of assembly, component of the eukaryotic translation initiation factor 3 (eIF-3) complex. The eIF-3 complex interacts with pix.

It localises to the cytoplasm. Component of the eukaryotic translation initiation factor 3 (eIF-3) complex, which is involved in protein synthesis of a specialized repertoire of mRNAs and, together with other initiation factors, stimulates binding of mRNA and methionyl-tRNAi to the 40S ribosome. The eIF-3 complex specifically targets and initiates translation of a subset of mRNAs involved in cell proliferation. In Drosophila mojavensis (Fruit fly), this protein is Eukaryotic translation initiation factor 3 subunit F-1.